The chain runs to 808 residues: MLVSYKWLQEYIEIGDISPQEIAEKMTRSGIEIDFIHERNKGATNVVVGYVAEVAPHPDADKLNVCQVDIGEEERVQIVCGAPNVSSGQYVAVAKVGARLPGGIKIKKAKLRGQHSNGMICSLQELGIDSKLVPKGYVDGIYVFPETQSVEPGQDALAIFELNDSVLELDLTPNRSDCMHMLGVAYELAALYDRPIKMPKTKVKEVIESADGYINVSVENGEDTPFYQALVIKDVKIGPSPSWLQNRLMAAGIRPISNVVDVTNYVLLEYGQPLHAFDYHALASKSIHVRRAKAEEAFTTLDGEKRTLSPEQLVVTNGREPVALAGVMGGLHSEVTAATTTVVLEAAAFHPTVVRRSARLAGLRSDSSARFEKGINQERVSEAARRAAYLIQEIAGGIVLSGAAIADARVRSERVIALDLDKMNERIGTNLSIMEVAALMRRLQFPCEKVGSDLHVTVPHRRGDITIPEDLYEEVARLYGYDELPSTLPVGNTTQGKRTAEQAKRRKMEAYLRSAGLSEAISYALTSSEKAALFAAETIKPIQVAMPMSEERSTMRTSLLPHLYDICTYNLNRKNNDVLLYERGSVFLSEQETLTELPTEQERLAVLLSGTYMSHPWQGEKKAVDFYVLKGIAEGLMETLGLSEQIEYKPDVRPGFHPGRTANVLLKGESIGFLAQVHPSTQKALDLNETYVLELNVDALFAAETEALIYRGIPRYPAITRDMALVVSKETTAAELMAIIREAGGELLETVSIFDVYEGEHMESGKKSIAFSLTYRHAERTLTDEEASLAHEGIVAEVQKQTGAVLRA.

The 118-residue stretch at 40-157 folds into the tRNA-binding domain; it reads NKGATNVVVG…QSVEPGQDAL (118 aa). The B5 domain occupies 411 to 486; it reads RSERVIALDL…RLYGYDELPS (76 aa). 4 residues coordinate Mg(2+): aspartate 464, aspartate 470, glutamate 473, and glutamate 474. Residues 714 to 807 enclose the FDX-ACB domain; the sequence is PRYPAITRDM…VQKQTGAVLR (94 aa).

This sequence belongs to the phenylalanyl-tRNA synthetase beta subunit family. Type 1 subfamily. In terms of assembly, tetramer of two alpha and two beta subunits. The cofactor is Mg(2+).

Its subcellular location is the cytoplasm. The enzyme catalyses tRNA(Phe) + L-phenylalanine + ATP = L-phenylalanyl-tRNA(Phe) + AMP + diphosphate + H(+). The chain is Phenylalanine--tRNA ligase beta subunit from Shouchella clausii (strain KSM-K16) (Alkalihalobacillus clausii).